We begin with the raw amino-acid sequence, 89 residues long: Small ribosomal subunit protein uS14 (89 aa).

The protein belongs to the universal ribosomal protein uS14 family. Part of the 30S ribosomal subunit. Contacts proteins S3 and S10.

Its function is as follows. Binds 16S rRNA, required for the assembly of 30S particles and may also be responsible for determining the conformation of the 16S rRNA at the A site. The sequence is that of Small ribosomal subunit protein uS14 from Chlorobium phaeovibrioides (strain DSM 265 / 1930) (Prosthecochloris vibrioformis (strain DSM 265)).